A 1405-amino-acid chain; its full sequence is DNA-directed RNA polymerase subunit beta' (1405 aa).

Zn(2+) contacts are provided by cysteine 70, cysteine 72, cysteine 85, and cysteine 88. Mg(2+)-binding residues include aspartate 460, aspartate 462, and aspartate 464. Zn(2+)-binding residues include cysteine 814, cysteine 888, cysteine 895, and cysteine 898.

This sequence belongs to the RNA polymerase beta' chain family. As to quaternary structure, the RNAP catalytic core consists of 2 alpha, 1 beta, 1 beta' and 1 omega subunit. When a sigma factor is associated with the core the holoenzyme is formed, which can initiate transcription. Mg(2+) is required as a cofactor. It depends on Zn(2+) as a cofactor.

The catalysed reaction is RNA(n) + a ribonucleoside 5'-triphosphate = RNA(n+1) + diphosphate. Functionally, DNA-dependent RNA polymerase catalyzes the transcription of DNA into RNA using the four ribonucleoside triphosphates as substrates. This is DNA-directed RNA polymerase subunit beta' from Shewanella baltica (strain OS223).